A 2581-amino-acid chain; its full sequence is MADPIMDLFDDPNLFGLDSLTDDSFNQVTQDPIEEALGLPSSLDSLDQMNQDGGSGDVGNSSASDLVPPPEETASTELPKESTAPAPESLTLHDYTTQPTSQEQPAQPVLQTSTPTSGLLQVSKSQEILSQGNPFMGVSATAVSPSNTGGQPSQSAPKIVILKAPPNSSVTGAHVAQIQAQGITSTAQPLVAGTANGGKVTFTKVLTGTPLRPGVSIVSGNTVLATKVPGNQAAVQRIVQPSRPVKQLVLQPVKGSAPAGNPGATGPPLKPAVTLTSTPAQGESKRITLVLQQPQSGGPQGHRHVVLGSLPGKIVLQGNQLAALTQAKSAQGQPAKVVTIQLQVQQPQQKIQIVPQPPSSQPQPQPPPSAQPLTLSSVQQAQIMGPGQNPGQRLSVPLKMVLQPQAGSSQGASSGLSVVKVLSASEVAALSSPASCAPHTAGKTGMEENRRLEHQKKQEKANRIVAEAIARARARGEQNIPRVLNEDELPSVRPEEEGEKKRRKKSSGERLKEEKPKKSKTAAASKTKGKSKLNTITPVVGKKRKRNTSSDNSDVEVMPAQSPREDEESSIQKRRSNRQVKRKKYTEDLDIKITDDEEEEEVDVTGPIKPEPILPEPVPEPDGETLPSMQFFVENPSEEDAAIVDKVLSMRVVKKELPSGQYTEAEEFFVKYKNYSYLHCEWATISQLEKDKRIHQKLKRFKTKMAQMRHFFHEDEEPFNPDYVEVDRILDESHSVDKDNGEPVIYYLVKWCSLPYEDSTWELKEDVDEGKIREFKRIQSRHPELKRVNRPQANAWKKLELSHEYKNRNQLREYQLEGVNWLLFNWYNRQNCILADEMGLGKTIQSIAFLQEVYNVGIHGPFLVIAPLSTITNWEREFNTWTEMNTIVYHGSLASRQMIQQYEMYCKDSRGRLIPGAYKFDALITTFEMILSDCPELREIEWRCVIIDEAHRLKNRNCKLLDSLKHMDLEHKVLLTGTPLQNTVEELFSLLHFLEPSQFPSESEFLKDFGDLKTEEQVQKLQAILKPMMLRRLKEDVEKNLAPKQETIIEVELTNIQKKYYRAILEKNFSFLSKGAGHTNMPNLLNTMMELRKCCNHPYLINGAEEKILMEFREACHIIPQDFHLQAMVRSAGKLVLIDKLLPKLKAGGHKVLIFSQMVRCLDILEDYLIQRRYLYERIDGRVRGNLRQAAIDRFSKPDSDRFVFLLCTRAGGLGINLTAADTCIIFDSDWNPQNDLQAQARCHRIGQSKAVKVYRLITRNSYEREMFDKASLKLGLDKAVLQSMSGRDGNITGIQQFSKKEIEDLLRKGAYAAIMEEDDEGSKFCEEDIDQILLRRTTTITIESEGKGSTFAKASFVASENRTDISLDDPNFWQKWAKKADLDMDLLNSKNNLVIDTPRVRKQTRHFSTLKDDDLVEFSDLESEDDERPRSRRHDRHHTYGRTDCFRVEKHLLVYGWGRWRDILSHGRFKRRMTERDVETICRAILVYCLLHYRGDENIKSFIWDLISPAENGKTKELQNHSGLSIPVPRGRKGKKVKSQSTFDIHKADWIRKYNPDTLFQDESYKKHLKHQCNKVLLRVRMLYYLRQEVIGDQAEKVLGGAIASEIDIWFPVVDQLEVPTTWWDSEADKSLLIGVFKHGYEKYNTMRADPALCFLEKAGRPDDKAIAAEHRVLDNFSDLVEGIDFDKDCEDPEYKPLQGPPKDPDDEGDPLMMMDEEISVIDGDEAPVTQQPGHLFWPPGSALTARLRRLVTAYQRSYKREQMKIEAAERGDRRRRRCEAAFKLKEIARREKQQRWTRREQTDFYRVVSTFGVEYDPDNMQFHWDRFRTFARLDKKTDESLTKYFHGFVAMCRQVCRLPPAAGDEPPDPNLFIEPITEERASRTLYRIELLRRLREQVLCHPLLEDRLALCQPPGLELPKWWEPVRHDGELLRGAARHGVSQTDCNIMQDPDFSFLAARMNYMQNHQAGASAASLSRCSTPLLHQQCTSRTASPSPLRPDVPAEKSPEENAVQVPSLDSLTLKLEDEVVARSRLTPQDYEIRVASSDTAPLSRSVPPVKLEDDDDSDSELDLSKLSPSSSSSSSSSSSSSSSDESEDEKEEKLTADRSRPKLYDEESLLSLTMSQDGFPNEDGEQMTPELLLLQERQRASEWPKDRVLINRIDLVCQAVLSGKWPSNRRSQEMTTGGILGPGNHLLDSPSLTPGEYGDSPVPTPRSSSAASMVEEEASAVTTAAAQFTKLRRGMDEKEFTVQIKDEEGLKLTFQKHRLMANGVMGDGHPLFHKKKGNRKKLVELEVECMEEPNHLDVDLETRIPVINKVDGTLLVGDEAPRRAELDMWLQGHPEFAVDPRFLAYMEERRKQKWQRCKKNNKTELNCLGMEPVQPANSRNGKKGHYAETAFNRVLPGPIAPENSKKRVRRTRPDLSKMMALMQGGSTGSLSLHNTFQHSSSNLQSVSSLGHSSATSASLPFMPFVMGGAAAPPHVDSSTMLHHHHHHPHPHHHHHHHPGLRTTGYPSSPATTTSGTALRLPTLQHEDDDEEEDEDDDDLSQGYDSSERDFSLIDDPMMPANSDSSDDADD.

3 disordered regions span residues 22-114 (DDSF…QTST), 253-281 (VKGS…TPAQ), and 349-375 (QKIQ…PLTL). 2 stretches are compositionally biased toward polar residues: residues 42 to 64 (SLDS…SSAS) and 94 to 114 (DYTT…QTST). Residues 255 to 267 (GSAPAGNPGATGP) are compositionally biased toward low complexity. Positions 355 to 370 (PQPPSSQPQPQPPPSA) are enriched in pro residues. Position 432 is a phosphoserine (Ser-432). Disordered regions lie at residues 473–584 (RARG…KRKK) and 596–616 (DEEE…ILPE). The span at 493 to 516 (RPEEEGEKKRRKKSSGERLKEEKP) shows a compositional bias: basic and acidic residues. Phosphoserine is present on residues Ser-553 and Ser-562. Positions 572 to 584 (QKRRSNRQVKRKK) are enriched in basic residues. Residue Lys-609 forms a Glycyl lysine isopeptide (Lys-Gly) (interchain with G-Cter in SUMO) linkage. 2 consecutive Chromo domains span residues 642-709 (AIVD…AQMR) and 724-790 (VEVD…RVNR). The Helicase ATP-binding domain occupies 823–997 (LFNWYNRQNC…FSLLHFLEPS (175 aa)). 836–843 (DEMGLGKT) serves as a coordination point for ATP. A DEAH box motif is present at residues 948 to 951 (DEAH). The Helicase C-terminal domain occupies 1137–1288 (LIDKLLPKLK…KAVLQSMSGR (152 aa)). Residues Ser-1420 and Ser-1424 each carry the phosphoserine modification. Residues 1692-1713 (EDPEYKPLQGPPKDPDDEGDPL) form a disordered region. An interaction with FAM124B region spans residues 1789 to 2302 (IARREKQQRW…LVELEVECME (514 aa)). Phosphoserine occurs at positions 1976 and 1978. The disordered stretch occupies residues 1988 to 2016 (QCTSRTASPSPLRPDVPAEKSPEENAVQV). Thr-1993 is modified (phosphothreonine). A phosphoserine mark is found at Ser-1995, Ser-1997, and Ser-2008. Lys-2025 participates in a covalent cross-link: Glycyl lysine isopeptide (Lys-Gly) (interchain with G-Cter in SUMO2). 2 disordered regions span residues 2047–2118 (SSDT…YDEE) and 2179–2221 (NRRS…SSSA). The segment covering 2063-2072 (EDDDDSDSEL) has biased composition (acidic residues). 2 positions are modified to phosphoserine: Ser-2068 and Ser-2070. Residues 2075–2094 (SKLSPSSSSSSSSSSSSSSS) show a composition bias toward low complexity. Basic and acidic residues predominate over residues 2102-2116 (EEKLTADRSRPKLYD). 3 positions are modified to phosphoserine: Ser-2182, Ser-2200, and Ser-2202. Thr-2204 carries the post-translational modification Phosphothreonine. Ser-2211 bears the Phosphoserine mark. Thr-2215 is subject to Phosphothreonine. Ser-2223 is subject to Phosphoserine. Lys-2256 participates in a covalent cross-link: Glycyl lysine isopeptide (Lys-Gly) (interchain with G-Cter in SUMO2). Positions 2484-2581 (PHVDSSTMLH…NSDSSDDADD (98 aa)) are disordered. Residues 2492–2510 (LHHHHHHPHPHHHHHHHPG) are compositionally biased toward basic residues. The span at 2513–2528 (TTGYPSSPATTTSGTA) shows a compositional bias: low complexity. Phosphoserine is present on Ser-2519. A compositionally biased stretch (acidic residues) spans 2537–2550 (EDDDEEEDEDDDDL). A compositionally biased stretch (low complexity) spans 2565–2574 (DDPMMPANSD).

This sequence belongs to the SNF2/RAD54 helicase family. CHD8 subfamily. Interacts with p53/TP53, histone H1 and CTCF. Component of some MLL1/MLL complex, at least composed of the core components KMT2A/MLL1, ASH2L, HCFC1/HCF1, WDR5 and RBBP5, as well as the facultative components BACC1, CHD8, E2F6, HSP70, INO80C, KANSL1, LAS1L, MAX, MCRS1, MGA, KAT8/MOF, PELP1, PHF20, PRP31, RING2, RUVB1/TIP49A, RUVB2/TIP49B, SENP3, TAF1, TAF4, TAF6, TAF7, TAF9 and TEX10. Interacts with CHD7. Interacts with FAM124B. Interacts with CTNNB1. Interacts with PIAS3. Interacts with TLK2. Interacts with HNRNPL in an RNA-dependent manner. Sumoylated.

It localises to the nucleus. The catalysed reaction is ATP + H2O = ADP + phosphate + H(+). Functionally, ATP-dependent chromatin-remodeling factor, it slides nucleosomes along DNA; nucleosome sliding requires ATP. Acts as a transcription repressor by remodeling chromatin structure and recruiting histone H1 to target genes. Suppresses p53/TP53-mediated apoptosis by recruiting histone H1 and preventing p53/TP53 transactivation activity. Acts as a negative regulator of Wnt signaling pathway by regulating beta-catenin (CTNNB1) activity. Negatively regulates CTNNB1-targeted gene expression by being recruited specifically to the promoter regions of several CTNNB1 responsive genes. Involved in both enhancer blocking and epigenetic remodeling at chromatin boundary via its interaction with CTCF. Acts as a suppressor of STAT3 activity by suppressing the LIF-induced STAT3 transcriptional activity. Also acts as a transcription activator via its interaction with ZNF143 by participating in efficient U6 RNA polymerase III transcription. Regulates alternative splicing of a core group of genes involved in neuronal differentiation, cell cycle and DNA repair. Enables H3K36me3-coupled transcription elongation and co-transcriptional RNA processing likely via interaction with HNRNPL. The protein is Chromodomain-helicase-DNA-binding protein 8 of Rattus norvegicus (Rat).